The primary structure comprises 206 residues: MMSHKKQDAFQGLIDALKVLPNVGPKSAQRIAYHLLQHKRKEAEKLVDALQTALKQVYHCAMCNTFCEGGLCDICADETRDGRRLMVVHMPADVSNMEAANCHDGLYFVLMGQINTALGMDVSAIALDRLAQRLGGGEVEEIIIATAFTAEGNATAYVLSEFFKNLPYKVSRLSQGIPLGGELEYVDAGTLAQAVYERRLIKEGGA.

A C4-type zinc finger spans residues 60–75 (CAMCNTFCEGGLCDIC). A Toprim domain is found at 83–178 (RRLMVVHMPA…KVSRLSQGIP (96 aa)).

This sequence belongs to the RecR family.

Its function is as follows. May play a role in DNA repair. It seems to be involved in an RecBC-independent recombinational process of DNA repair. It may act with RecF and RecO. The polypeptide is Recombination protein RecR (Neisseria meningitidis serogroup B (strain ATCC BAA-335 / MC58)).